A 714-amino-acid chain; its full sequence is Palmitoyltransferase ZDHHC5 (714 aa).

Topologically, residues 1–13 are cytoplasmic; sequence MPAESAKRFKPSK. The helical transmembrane segment at 14–34 threads the bilayer; the sequence is YVPVSAAAIFLVGATTLFFAF. Over 35 to 52 the chain is Extracellular; sequence TCPGLSLSVSPAVPVYNA. The helical transmembrane segment at 53-73 threads the bilayer; it reads VVFLFVLANFSMATFMDPGVF. Over 74-148 the chain is Cytoplasmic; the sequence is PRAEEDEDKE…NCIGRRNYRY (75 aa). Residue Tyr-91 is modified to Phosphotyrosine. A DHHC domain is found at 104-154; it reads KWCATCRFYRPPRCSHCSVCDNCVEEFDHHCPWVNNCIGRRNYRYFFLFLL. The active-site S-palmitoyl cysteine intermediate is Cys-134. A helical transmembrane segment spans residues 149-169; the sequence is FFLFLLSLTAHITGVFGFGLL. Topologically, residues 170 to 191 are extracellular; the sequence is YVLYHMEELSGVRTAVTMAVMC. Residues 192 to 212 form a helical membrane-spanning segment; that stretch reads VAGLFFIPVAGLTGFHVVLVA. At 213-714 the chain is on the cytoplasmic side; sequence RGRTTNEQVT…VGGTTYEISV (502 aa). Phosphoserine is present on Ser-247. The segment at 289–714 is disordered; sequence GELRRTKSKG…VGGTTYEISV (426 aa). The residue at position 294 (Thr-294) is a Phosphothreonine. Ser-296 and Ser-299 each carry phosphoserine. A Phosphothreonine modification is found at Thr-303. Ser-345 is subject to Phosphoserine. Phosphothreonine occurs at positions 348 and 350. Residues 359–373 show a composition bias toward low complexity; it reads SSSSASAAMPHSSSA. Phosphoserine is present on residues Ser-380, Ser-398, Ser-406, and Ser-409. The segment covering 388-398 has biased composition (polar residues); it reads AESSRQPSYRS. Thr-411 is modified (phosphothreonine). A compositionally biased stretch (low complexity) spans 422-432; sequence SSGSRSSSLKS. Residues Ser-425, Ser-429, and Ser-432 each carry the phosphoserine modification. Thr-436 carries the phosphothreonine modification. Residues 445–478 are compositionally biased toward polar residues; the sequence is SIRSEGTTSTSYKSLANQTRNGSLSYDSLLTPSD. Phosphoserine is present on residues Ser-529 and Ser-554. Arg-616 carries the post-translational modification Omega-N-methylarginine. Ser-620 bears the Phosphoserine mark. A Phosphothreonine modification is found at Thr-658. The span at 667–678 shows a compositional bias: polar residues; it reads TAYSKSNGQPKS. The span at 683–692 shows a compositional bias: pro residues; that stretch reads PPGPGQPPLS. Phosphoserine is present on Ser-693. The residue at position 696 (Arg-696) is an Omega-N-methylarginine.

This sequence belongs to the DHHC palmitoyltransferase family. ERF2/ZDHHC9 subfamily. Post-translationally, phosphorylation regulates association with endocytic proteins and its subcellular localization. Phosphorylation by LYN during fatty acid uptake leads to inactivation of the activity. In terms of processing, autopalmitoylated. Palmitoylation of the C-terminal tail regulates stimulation-dependent plasma membrane motility.

The protein resides in the cell membrane. The catalysed reaction is L-cysteinyl-[protein] + hexadecanoyl-CoA = S-hexadecanoyl-L-cysteinyl-[protein] + CoA. In terms of biological role, palmitoyltransferase that catalyzes the addition of palmitate onto various protein substrates such as CTNND2, CD36, GSDMD, NLRP3, NOD1, NOD2, STAT3 and S1PR1 thus plays a role in various biological processes including cell adhesion, inflammation, fatty acid uptake, bacterial sensing or cardiac functions. Plays an important role in the regulation of synapse efficacy by mediating palmitoylation of delta-catenin/CTNND2, thereby increasing synaptic delivery and surface stabilization of alpha-amino-3-hydroxy-5-methyl-4-isoxazole propionic acid receptors (AMPARs). Under basal conditions, remains at the synaptic membrane through FYN-mediated phosphorylation that prevents association with endocytic proteins. Neuronal activity enhances the internalization and trafficking of DHHC5 from spines to dendritic shafts where it palmitoylates delta-catenin/CTNND2. Regulates cell adhesion at the plasma membrane by palmitoylating GOLGA7B and DSG2. Plays a role in innate immune response by mediating the palmitoylation of NOD1 and NOD2 and their proper recruitment to the bacterial entry site and phagosomes. Also participates in fatty acid uptake by palmitoylating CD36 and thereby targeting it to the plasma membrane. Upon binding of fatty acids to CD36, gets phosphorylated by LYN leading to inactivation and subsequent CD36 caveolar endocytosis. Controls oligodendrocyte development by catalyzing STAT3 palmitoylation. Acts as a regulator of inflammatory response by mediating palmitoylation of NLRP3 and GSDMD. Palmitoylates NLRP3 to promote inflammasome assembly and activation. Activates pyroptosis by catalyzing palmitoylation of gasdermin-D (GSDMD), thereby promoting membrane translocation and pore formation of GSDMD. This chain is Palmitoyltransferase ZDHHC5 (ZDHHC5), found in Bos taurus (Bovine).